An 80-amino-acid chain; its full sequence is Large ribosomal subunit protein uL24 (80 aa).

Belongs to the universal ribosomal protein uL24 family. Part of the 50S ribosomal subunit.

In terms of biological role, one of two assembly initiator proteins, it binds directly to the 5'-end of the 23S rRNA, where it nucleates assembly of the 50S subunit. Functionally, one of the proteins that surrounds the polypeptide exit tunnel on the outside of the subunit. The chain is Large ribosomal subunit protein uL24 from Chlorobaculum parvum (strain DSM 263 / NCIMB 8327) (Chlorobium vibrioforme subsp. thiosulfatophilum).